The primary structure comprises 113 residues: Nitrogenase-stabilizing/protective protein NifW (113 aa).

The protein belongs to the NifW family. As to quaternary structure, homotrimer; associates with NifD.

In terms of biological role, may protect the nitrogenase Fe-Mo protein from oxidative damage. This is Nitrogenase-stabilizing/protective protein NifW from Polaromonas naphthalenivorans (strain CJ2).